The chain runs to 88 residues: Small ribosomal subunit protein bS20 (88 aa).

It belongs to the bacterial ribosomal protein bS20 family.

In terms of biological role, binds directly to 16S ribosomal RNA. This is Small ribosomal subunit protein bS20 from Bartonella quintana (strain Toulouse) (Rochalimaea quintana).